We begin with the raw amino-acid sequence, 244 residues long: 1-(5-phosphoribosyl)-5-[(5-phosphoribosylamino)methylideneamino] imidazole-4-carboxamide isomerase (244 aa).

Asp10 acts as the Proton acceptor in catalysis. The active-site Proton donor is Asp129.

Belongs to the HisA/HisF family.

It localises to the cytoplasm. The catalysed reaction is 1-(5-phospho-beta-D-ribosyl)-5-[(5-phospho-beta-D-ribosylamino)methylideneamino]imidazole-4-carboxamide = 5-[(5-phospho-1-deoxy-D-ribulos-1-ylimino)methylamino]-1-(5-phospho-beta-D-ribosyl)imidazole-4-carboxamide. It participates in amino-acid biosynthesis; L-histidine biosynthesis; L-histidine from 5-phospho-alpha-D-ribose 1-diphosphate: step 4/9. In Rhodococcus jostii (strain RHA1), this protein is 1-(5-phosphoribosyl)-5-[(5-phosphoribosylamino)methylideneamino] imidazole-4-carboxamide isomerase.